The sequence spans 260 residues: ATP synthase subunit a (260 aa).

Transmembrane regions (helical) follow at residues 27 to 47 (FWTV…LFIW), 90 to 110 (IAPL…MDLI), 132 to 154 (SADV…YYSI), 208 to 228 (LIFI…LSVP), and 230 to 250 (AIFH…LTIV).

It belongs to the ATPase A chain family. As to quaternary structure, F-type ATPases have 2 components, CF(1) - the catalytic core - and CF(0) - the membrane proton channel. CF(1) has five subunits: alpha(3), beta(3), gamma(1), delta(1), epsilon(1). CF(0) has three main subunits: a(1), b(2) and c(9-12). The alpha and beta chains form an alternating ring which encloses part of the gamma chain. CF(1) is attached to CF(0) by a central stalk formed by the gamma and epsilon chains, while a peripheral stalk is formed by the delta and b chains.

It is found in the cell inner membrane. Key component of the proton channel; it plays a direct role in the translocation of protons across the membrane. This is ATP synthase subunit a from Aeromonas hydrophila subsp. hydrophila (strain ATCC 7966 / DSM 30187 / BCRC 13018 / CCUG 14551 / JCM 1027 / KCTC 2358 / NCIMB 9240 / NCTC 8049).